A 369-amino-acid chain; its full sequence is Chaperone protein DnaJ (369 aa).

One can recognise a J domain in the interval 4-69; it reads SYYEILEVEK…KKRALYDRYG (66 aa). The CR-type zinc finger occupies 130–207; sequence GCKKTIKVQY…CKGKTYILKD (78 aa). 8 residues coordinate Zn(2+): cysteine 143, cysteine 146, cysteine 159, cysteine 162, cysteine 181, cysteine 184, cysteine 195, and cysteine 198. 4 CXXCXGXG motif repeats span residues 143-150, 159-166, 181-188, and 195-202; these read CESCDGTG, CKQCNGQG, CGACQGKG, and CQACKGKT.

This sequence belongs to the DnaJ family. As to quaternary structure, homodimer. Zn(2+) serves as cofactor.

The protein localises to the cytoplasm. Participates actively in the response to hyperosmotic and heat shock by preventing the aggregation of stress-denatured proteins and by disaggregating proteins, also in an autonomous, DnaK-independent fashion. Unfolded proteins bind initially to DnaJ; upon interaction with the DnaJ-bound protein, DnaK hydrolyzes its bound ATP, resulting in the formation of a stable complex. GrpE releases ADP from DnaK; ATP binding to DnaK triggers the release of the substrate protein, thus completing the reaction cycle. Several rounds of ATP-dependent interactions between DnaJ, DnaK and GrpE are required for fully efficient folding. Also involved, together with DnaK and GrpE, in the DNA replication of plasmids through activation of initiation proteins. In Helicobacter pylori (strain ATCC 700392 / 26695) (Campylobacter pylori), this protein is Chaperone protein DnaJ.